Consider the following 704-residue polypeptide: SH3KBP1-binding protein 1 (704 aa).

At Ala2 the chain carries N-acetylalanine. Positions 19-88 (EVIHLNVGGK…LRTKELDPRG (70 aa)) constitute a BTB domain. The interval 145-165 (LVGPQQAGGRPAPVRRSNTMP) is disordered. Phosphothreonine is present on Thr163. 5 WD repeats span residues 233 to 280 (RLDW…GGSE), 283 to 322 (VFHL…WQVQ), 324 to 359 (VQPI…LRMK), 428 to 466 (VHRS…GMIS), and 548 to 586 (LECE…DGLG). The segment covering 611–644 (ASSRGSLPSPSPRTSLTSLHSAFSNTSLSSRRGS) has biased composition (low complexity). Positions 611–704 (ASSRGSLPSP…PKTKLNETSF (94 aa)) are disordered. The PXXXPR signature appears at 618 to 623 (PSPSPR). Ser644 and Ser646 each carry phosphoserine. The PXXXPR signature appears at 678-683 (PTPAPR).

This sequence belongs to the KCTD3 family. In terms of assembly, monomer. Interacts with CUL3; interaction is direct and forms a 5:5 heterodecamer. Interacts (via PXXXPR motifs) with SH3KBP1 (via SH3 domains). Directly interacts with cathepsin B/CTSB.

It is found in the lysosome. Its function is as follows. Inhibits CBL-SH3KBP1 complex mediated down-regulation of EGFR signaling by sequestration of SH3KBP1. Binds to SH3KBP1 and prevents its interaction with CBL and inhibits translocation of SH3KBP1 to EGFR containing vesicles upon EGF stimulation. This chain is SH3KBP1-binding protein 1 (SHKBP1), found in Bos taurus (Bovine).